The primary structure comprises 597 residues: ATP-dependent lipid A-core flippase (597 aa).

Helical transmembrane passes span 26 to 46 (LWPY…AMAV), 76 to 96 (WFVP…QYAS), 138 to 158 (AIVF…VTLV), 164 to 184 (VVFL…IVAV), 263 to 283 (QPLT…IAVV), and 292 to 312 (VGGF…LKHL). Residues 38–321 (IGAIVAMAVS…LMDVNQPLQR (284 aa)) enclose the ABC transmembrane type-1 domain. The 238-residue stretch at 353-590 (VEFRDVSFVY…DGLYAHLHRI (238 aa)) folds into the ABC transporter domain. 390-397 (GPSGSGKT) lines the ATP pocket.

Belongs to the ABC transporter superfamily. Lipid exporter (TC 3.A.1.106) family. As to quaternary structure, homodimer.

It localises to the cell inner membrane. It carries out the reaction ATP + H2O + lipid A-core oligosaccharideSide 1 = ADP + phosphate + lipid A-core oligosaccharideSide 2.. Involved in lipopolysaccharide (LPS) biosynthesis. Translocates lipid A-core from the inner to the outer leaflet of the inner membrane. Transmembrane domains (TMD) form a pore in the inner membrane and the ATP-binding domain (NBD) is responsible for energy generation. The protein is ATP-dependent lipid A-core flippase of Paraburkholderia xenovorans (strain LB400).